The following is a 566-amino-acid chain: Cyclin-dependent kinase-like 2 (566 aa).

Residues 4-287 enclose the Protein kinase domain; the sequence is YENLGLVGEG…CAELLHHDFF (284 aa). ATP is bound by residues 10–18 and Lys-33; that span reads VGEGSYGMV. The [NKR]KIAxRE signature appears at 45–51; sequence KKIAMRE. Asp-126 acts as the Proton acceptor in catalysis. 2 disordered regions span residues 307 to 334 and 545 to 566; these read DARN…GEER and QVSG…EHQH. Residues 320 to 334 show a composition bias toward basic and acidic residues; that stretch reads RKKEKEKDDSLGEER.

It belongs to the protein kinase superfamily. CMGC Ser/Thr protein kinase family. CDC2/CDKX subfamily.

The protein localises to the cytoplasm. It localises to the nucleus. It carries out the reaction L-seryl-[protein] + ATP = O-phospho-L-seryl-[protein] + ADP + H(+). It catalyses the reaction L-threonyl-[protein] + ATP = O-phospho-L-threonyl-[protein] + ADP + H(+). This is Cyclin-dependent kinase-like 2 from Oryctolagus cuniculus (Rabbit).